We begin with the raw amino-acid sequence, 425 residues long: Serine hydroxymethyltransferase 2 (425 aa).

(6S)-5,6,7,8-tetrahydrofolate contacts are provided by residues L121 and 125–127 (GHL). K230 carries the post-translational modification N6-(pyridoxal phosphate)lysine.

It belongs to the SHMT family. As to quaternary structure, homodimer. Pyridoxal 5'-phosphate serves as cofactor.

Its subcellular location is the cytoplasm. It catalyses the reaction (6R)-5,10-methylene-5,6,7,8-tetrahydrofolate + glycine + H2O = (6S)-5,6,7,8-tetrahydrofolate + L-serine. Its pathway is one-carbon metabolism; tetrahydrofolate interconversion. It participates in amino-acid biosynthesis; glycine biosynthesis; glycine from L-serine: step 1/1. Its function is as follows. Catalyzes the reversible interconversion of serine and glycine with tetrahydrofolate (THF) serving as the one-carbon carrier. This reaction serves as the major source of one-carbon groups required for the biosynthesis of purines, thymidylate, methionine, and other important biomolecules. Also exhibits THF-independent aldolase activity toward beta-hydroxyamino acids, producing glycine and aldehydes, via a retro-aldol mechanism. In Mycobacterium bovis (strain ATCC BAA-935 / AF2122/97), this protein is Serine hydroxymethyltransferase 2.